We begin with the raw amino-acid sequence, 391 residues long: Phosphoglycerate kinase (391 aa).

Residues 21 to 23 (DLN), Arg-36, 59 to 62 (HLGR), Arg-113, and Arg-146 each bind substrate. ATP contacts are provided by residues Lys-197, Glu-319, and 345–348 (GGDT).

It belongs to the phosphoglycerate kinase family. Monomer.

The protein localises to the cytoplasm. It catalyses the reaction (2R)-3-phosphoglycerate + ATP = (2R)-3-phospho-glyceroyl phosphate + ADP. The protein operates within carbohydrate degradation; glycolysis; pyruvate from D-glyceraldehyde 3-phosphate: step 2/5. This Shewanella baltica (strain OS155 / ATCC BAA-1091) protein is Phosphoglycerate kinase.